Reading from the N-terminus, the 124-residue chain is Protein MGF 110-5L (124 aa).

Residues 1 to 28 (MLVIILGVIGLLANQVLGLPTQAGGHLR) form the signal peptide.

The protein belongs to the asfivirus MGF 110 family.

Functionally, plays a role in virus cell tropism, and may be required for efficient virus replication in macrophages. This chain is Protein MGF 110-5L, found in Ornithodoros (relapsing fever ticks).